The sequence spans 103 residues: Histone H4 (103 aa).

A compositionally biased stretch (gly residues) spans 1-14; that stretch reads MSGRGKGGKGLGKG. The disordered stretch occupies residues 1–20; the sequence is MSGRGKGGKGLGKGGAKRHR. The residue at position 2 (Ser-2) is an N-acetylserine. Lys-6 and Lys-13 each carry N6-acetyl-N6-methyllysine; alternate. Lys-17 is subject to N6-acetyllysine. Residues 17–21 mediate DNA binding; sequence KRHRK. The residue at position 21 (Lys-21) is an N6-methyllysine.

It belongs to the histone H4 family. As to quaternary structure, the nucleosome is a histone octamer containing two molecules each of H2A, H2B, H3 and H4 assembled in one H3-H4 heterotetramer and two H2A-H2B heterodimers. The octamer wraps approximately 147 bp of DNA.

It localises to the nucleus. Its subcellular location is the chromosome. Functionally, core component of nucleosome. Nucleosomes wrap and compact DNA into chromatin, limiting DNA accessibility to the cellular machineries which require DNA as a template. Histones thereby play a central role in transcription regulation, DNA repair, DNA replication and chromosomal stability. DNA accessibility is regulated via a complex set of post-translational modifications of histones, also called histone code, and nucleosome remodeling. This Ascaris suum (Pig roundworm) protein is Histone H4.